The following is a 401-amino-acid chain: Probable tRNA sulfurtransferase (401 aa).

The THUMP domain occupies 60–165 (EEICSLLKNI…EEATFLTIRN (106 aa)). ATP is bound by residues 183–184 (ML), 208–209 (HF), Arg265, Gly287, and Gln296.

Belongs to the ThiI family.

The protein resides in the cytoplasm. The enzyme catalyses [ThiI sulfur-carrier protein]-S-sulfanyl-L-cysteine + a uridine in tRNA + 2 reduced [2Fe-2S]-[ferredoxin] + ATP + H(+) = [ThiI sulfur-carrier protein]-L-cysteine + a 4-thiouridine in tRNA + 2 oxidized [2Fe-2S]-[ferredoxin] + AMP + diphosphate. It catalyses the reaction [ThiS sulfur-carrier protein]-C-terminal Gly-Gly-AMP + S-sulfanyl-L-cysteinyl-[cysteine desulfurase] + AH2 = [ThiS sulfur-carrier protein]-C-terminal-Gly-aminoethanethioate + L-cysteinyl-[cysteine desulfurase] + A + AMP + 2 H(+). Its pathway is cofactor biosynthesis; thiamine diphosphate biosynthesis. Its function is as follows. Catalyzes the ATP-dependent transfer of a sulfur to tRNA to produce 4-thiouridine in position 8 of tRNAs, which functions as a near-UV photosensor. Also catalyzes the transfer of sulfur to the sulfur carrier protein ThiS, forming ThiS-thiocarboxylate. This is a step in the synthesis of thiazole, in the thiamine biosynthesis pathway. The sulfur is donated as persulfide by IscS. This chain is Probable tRNA sulfurtransferase, found in Bacillus velezensis (strain DSM 23117 / BGSC 10A6 / LMG 26770 / FZB42) (Bacillus amyloliquefaciens subsp. plantarum).